Here is a 300-residue protein sequence, read N- to C-terminus: Bifunctional protein FolD (300 aa).

Residues 168–170, serine 193, and isoleucine 234 each bind NADP(+); that span reads GRS.

The protein belongs to the tetrahydrofolate dehydrogenase/cyclohydrolase family. Homodimer.

It carries out the reaction (6R)-5,10-methylene-5,6,7,8-tetrahydrofolate + NADP(+) = (6R)-5,10-methenyltetrahydrofolate + NADPH. The catalysed reaction is (6R)-5,10-methenyltetrahydrofolate + H2O = (6R)-10-formyltetrahydrofolate + H(+). It functions in the pathway one-carbon metabolism; tetrahydrofolate interconversion. Functionally, catalyzes the oxidation of 5,10-methylenetetrahydrofolate to 5,10-methenyltetrahydrofolate and then the hydrolysis of 5,10-methenyltetrahydrofolate to 10-formyltetrahydrofolate. This chain is Bifunctional protein FolD, found in Ehrlichia canis (strain Jake).